Here is a 135-residue protein sequence, read N- to C-terminus: uncharacterized protein (135 aa).

This is an uncharacterized protein from Commelina yellow mottle virus (CoYMV).